The chain runs to 72 residues: Translation initiation factor IF-1 (72 aa).

Residues 1–72 (MTKEDNIEMQ…TKGRIIFRSR (72 aa)) form the S1-like domain.

This sequence belongs to the IF-1 family. As to quaternary structure, component of the 30S ribosomal translation pre-initiation complex which assembles on the 30S ribosome in the order IF-2 and IF-3, IF-1 and N-formylmethionyl-tRNA(fMet); mRNA recruitment can occur at any time during PIC assembly.

The protein localises to the cytoplasm. In terms of biological role, one of the essential components for the initiation of protein synthesis. Stabilizes the binding of IF-2 and IF-3 on the 30S subunit to which N-formylmethionyl-tRNA(fMet) subsequently binds. Helps modulate mRNA selection, yielding the 30S pre-initiation complex (PIC). Upon addition of the 50S ribosomal subunit IF-1, IF-2 and IF-3 are released leaving the mature 70S translation initiation complex. The sequence is that of Translation initiation factor IF-1 from Buchnera aphidicola subsp. Schizaphis graminum (strain Sg).